The chain runs to 316 residues: Transaldolase 2 (316 aa).

Residue lysine 131 is the Schiff-base intermediate with substrate of the active site.

The protein belongs to the transaldolase family. Type 1 subfamily. In terms of assembly, homodimer.

The protein localises to the cytoplasm. It catalyses the reaction D-sedoheptulose 7-phosphate + D-glyceraldehyde 3-phosphate = D-erythrose 4-phosphate + beta-D-fructose 6-phosphate. Its pathway is carbohydrate degradation; pentose phosphate pathway; D-glyceraldehyde 3-phosphate and beta-D-fructose 6-phosphate from D-ribose 5-phosphate and D-xylulose 5-phosphate (non-oxidative stage): step 2/3. Functionally, transaldolase is important for the balance of metabolites in the pentose-phosphate pathway. This is Transaldolase 2 from Salmonella paratyphi A (strain ATCC 9150 / SARB42).